A 338-amino-acid chain; its full sequence is Methionine import ATP-binding protein MetN 1 (338 aa).

The region spanning 2 to 241 is the ABC transporter domain; sequence IELHQVSKSF…AKHATTKRFV (240 aa). 38 to 45 is a binding site for ATP; that stretch reads GYSGAGKS.

It belongs to the ABC transporter superfamily. Methionine importer (TC 3.A.1.24) family. As to quaternary structure, the complex is composed of two ATP-binding proteins (MetN), two transmembrane proteins (MetI) and a solute-binding protein (MetQ).

It localises to the cell membrane. The enzyme catalyses L-methionine(out) + ATP + H2O = L-methionine(in) + ADP + phosphate + H(+). The catalysed reaction is D-methionine(out) + ATP + H2O = D-methionine(in) + ADP + phosphate + H(+). Part of the ABC transporter complex MetNIQ involved in methionine import. Responsible for energy coupling to the transport system. The chain is Methionine import ATP-binding protein MetN 1 from Listeria monocytogenes serotype 4b (strain F2365).